A 442-amino-acid chain; its full sequence is Lysosomal dipeptide transporter MFSD1 (442 aa).

A Dileucine internalization motif motif is present at residues 8-9 (LL). A run of 10 helical transmembrane segments spans residues 38-58 (LLVLALMCFLGFGSCFCYDNP), 85-105 (TVIFSIFVCVGQVIFALGALV), 107-127 (AFWLMEVGRFIFGIGGESLAV), 187-207 (LLIGGITCLFSLACALILAYL), 238-258 (LWLIFVICVCYYAAVFPFIGL), 276-296 (AINSVVYIISAPMSPVFGILV), 303-323 (IIWVLCAVITTLASHIMLAFT), 333-353 (LLGVAYSLLACALWPMVAFVV), 364-384 (FMQSIQNLGLAVIAIAAGMIL), and 390-410 (LFLEVFFSACVSLSLVAVVML).

The protein belongs to the major facilitator superfamily. Homodimer. Interacts with lysosomal protein GLMP (via lumenal domain); the interaction starts while both proteins are still in the endoplasmic reticulum and is required for stabilization of MFSD1 in lysosomes but has no direct effect on its targeting to lysosomes or transporter activity.

The protein resides in the lysosome membrane. The catalysed reaction is L-alpha-aminoacyl-L-arginine(out) = L-alpha-aminoacyl-L-arginine(in). The enzyme catalyses L-arginyl-L-alpha-amino acid(out) = L-arginyl-L-alpha-amino acid(in). It catalyses the reaction L-arginyl-glycine(out) = L-arginyl-glycine(in). It carries out the reaction L-alpha-aminoacyl-L-lysine(out) = L-alpha-aminoacyl-L-lysine(in). The catalysed reaction is L-aspartyl-L-lysine(out) = L-aspartyl-L-lysine(in). The enzyme catalyses L-alanyl-L-lysine(out) = L-alanyl-L-lysine(in). It catalyses the reaction L-lysyl-L-alpha-amino acid(out) = L-lysyl-L-alpha-amino acid(in). It carries out the reaction L-lysyl-L-alanine(out) = L-lysyl-L-alanine(in). The catalysed reaction is L-lysyl-L-lysine(out) = L-lysyl-L-lysine(in). The enzyme catalyses L-lysyl-glycine(out) = L-lysyl-glycine(in). It catalyses the reaction L-alpha-aminoacyl-L-histidine(out) = L-alpha-aminoacyl-L-histidine(in). It carries out the reaction L-histidyl-L-alpha-amino acid(out) = L-histidyl-L-alpha-amino acid(in). The catalysed reaction is L-histidyl-glycine(out) = L-histidyl-glycine(in). Functionally, lysosomal dipeptide uniporter that selectively exports lysine, arginine or histidine-containing dipeptides with a net positive charge from the lysosome lumen into the cytosol. Could play a role in a specific type of protein O-glycosylation indirectly regulating macrophages migration and tissue invasion. Also essential for liver homeostasis. The protein is Lysosomal dipeptide transporter MFSD1 of Gallus gallus (Chicken).